The chain runs to 130 residues: Small ribosomal subunit protein uS8 (130 aa).

It belongs to the universal ribosomal protein uS8 family. In terms of assembly, part of the 30S ribosomal subunit.

Functionally, one of the primary rRNA binding proteins, it binds directly to 16S rRNA central domain where it helps coordinate assembly of the platform of the 30S subunit. This is Small ribosomal subunit protein uS8 from Korarchaeum cryptofilum (strain OPF8).